We begin with the raw amino-acid sequence, 369 residues long: Tsukushi (369 aa).

The first 19 residues, 1–19 (MQFLAWFNMLLLLPCFSTT), serve as a signal peptide directing secretion. The 41-residue stretch at 20–60 (KTCFPGCHCEVESFGLFDSFSLTKVDCSGIGSHIVPVPIPL) folds into the LRRNT domain. LRR repeat units lie at residues 61 to 81 (DTSY…SMLT), 87 to 108 (TLVS…TFSR), 111 to 132 (YLES…CFSS), 134 to 155 (PLGD…VFAS), 161 to 181 (PLNV…HEKS), 184 to 205 (NIQN…QGIP), 206 to 226 (LRYL…DFKG), 229 to 248 (GLIH…SPYS), 254 to 276 (ALQV…VIFG), 279 to 300 (SIQE…VLKY), and 303 to 323 (SLKS…KEGQ). Asn76 carries N-linked (GlcNAc...) asparagine glycosylation. A glycan (N-linked (GlcNAc...) asparagine) is linked at Asn189. N-linked (GlcNAc...) asparagine glycosylation is present at Asn284.

In terms of assembly, forms a ternary complex with chordin/CHRD and BMP4. Interacts with FZD4 (via FZ domain); competes with WNT2B for binding to FZD4, inhibiting Wnt signaling and repressing peripheral eye development. Interacts with BMP4; shows stronger interaction with BMP4 than isoform 2. Interacts with DVR1/VG1; the interaction is inhibited by BMP4. Interacts with BMP7. As to quaternary structure, interacts with FZD4 (via FZ domain); competes with WNT2B for binding to FZD4, inhibiting Wnt signaling and repressing peripheral eye development. Interacts with BMP4; shows weaker interaction with BMP4 than isoform 1. Interacts with DVR1/VG1; the interaction is inhibited by BMP4. Interacts with BMP7. Post-translationally, N-glycosylated. In terms of tissue distribution, during embryonic development, expressed in the middle primitive streak and Hensen's node. Expressed in the peripheral region of the developing eye. Expressed in the presomitic mesoderm during somitogenesis in a NOTCH-dependent manner.

It is found in the secreted. Its function is as follows. Contributes to various developmental events through its interactions with multiple signaling pathways. Dorsalizing factor involved in the induction of Hensen's node by inhibiting bone morphogenetic proteins during gastrulation and by enhancing DVR1/VG1 activity. Wnt signaling inhibitor which competes with WNT2B for binding to Wnt receptor FZD4 and represses WNT2B-dependent development of the peripheral eye. Shows strong bone morphogenetic protein antagonistic activity. Functionally, shows weak bone morphogenetic protein antagonistic activity. The chain is Tsukushi (TSKU) from Gallus gallus (Chicken).